The sequence spans 328 residues: DNA-directed RNA polymerase subunit alpha (328 aa).

Positions 1–231 (MIYQMQMPAK…EHVAFFADFS (231 aa)) are alpha N-terminal domain (alpha-NTD). Positions 252–328 (MRKLLNTKIE…MDITKYQMKG (77 aa)) are alpha C-terminal domain (alpha-CTD).

This sequence belongs to the RNA polymerase alpha chain family. Homodimer. The RNAP catalytic core consists of 2 alpha, 1 beta, 1 beta' and 1 omega subunit. When a sigma factor is associated with the core the holoenzyme is formed, which can initiate transcription.

The catalysed reaction is RNA(n) + a ribonucleoside 5'-triphosphate = RNA(n+1) + diphosphate. DNA-dependent RNA polymerase catalyzes the transcription of DNA into RNA using the four ribonucleoside triphosphates as substrates. This Chlorobium phaeovibrioides (strain DSM 265 / 1930) (Prosthecochloris vibrioformis (strain DSM 265)) protein is DNA-directed RNA polymerase subunit alpha.